The chain runs to 39 residues: Photosystem II reaction center protein Y (39 aa).

A helical membrane pass occupies residues 7–25 (VLVVLLPVLLAGGWALKNI).

The protein belongs to the PsbY family. PSII is composed of 1 copy each of membrane proteins PsbA, PsbB, PsbC, PsbD, PsbE, PsbF, PsbH, PsbI, PsbJ, PsbK, PsbL, PsbM, PsbT, PsbX, PsbY, PsbZ, Psb30/Ycf12, peripheral proteins PsbO, CyanoQ (PsbQ), PsbU, PsbV and a large number of cofactors. It forms dimeric complexes.

It is found in the cellular thylakoid membrane. In terms of biological role, loosely associated component of the core of photosystem II (PSII), it is not always seen in crystals. PSII is a light-driven water plastoquinone oxidoreductase, using light energy to abstract electrons from H(2)O, generating a proton gradient subsequently used for ATP formation. The polypeptide is Photosystem II reaction center protein Y (Cyanothece sp. (strain PCC 7425 / ATCC 29141)).